Here is a 295-residue protein sequence, read N- to C-terminus: Bifunctional protein FolD (295 aa).

NADP(+)-binding positions include 175–177 (GVS) and I243.

This sequence belongs to the tetrahydrofolate dehydrogenase/cyclohydrolase family. In terms of assembly, homodimer.

It catalyses the reaction (6R)-5,10-methylene-5,6,7,8-tetrahydrofolate + NADP(+) = (6R)-5,10-methenyltetrahydrofolate + NADPH. The enzyme catalyses (6R)-5,10-methenyltetrahydrofolate + H2O = (6R)-10-formyltetrahydrofolate + H(+). The protein operates within one-carbon metabolism; tetrahydrofolate interconversion. Functionally, catalyzes the oxidation of 5,10-methylenetetrahydrofolate to 5,10-methenyltetrahydrofolate and then the hydrolysis of 5,10-methenyltetrahydrofolate to 10-formyltetrahydrofolate. The polypeptide is Bifunctional protein FolD (Xylella fastidiosa (strain 9a5c)).